The sequence spans 359 residues: Putative gluconeogenesis factor (359 aa).

Residues 317-359 form a disordered region; the sequence is VGNQDSSAPTVAATEQIRLDGKRPQTGVNGPVGKGPRGDDAWR.

The protein belongs to the gluconeogenesis factor family.

Its subcellular location is the cytoplasm. Functionally, required for morphogenesis under gluconeogenic growth conditions. The polypeptide is Putative gluconeogenesis factor (Mycobacterium leprae (strain TN)).